A 188-amino-acid polypeptide reads, in one-letter code: GTPase KRas (188 aa).

Residues 10 to 18 (GAGGVGKSA), 29 to 35 (VDEYDPT), 59 to 60 (AG), and 116 to 119 (NKCD) contribute to the GTP site. An Effector region motif is present at residues 32–40 (YDPTIEDSY). The interval 168 to 188 (EKMSKDGKKKKKKTKTKCIIM) is disordered. Residue cysteine 185 is modified to Cysteine methyl ester. Cysteine 185 carries S-farnesyl cysteine lipidation. Residues 186-188 (IIM) constitute a propeptide, removed in mature form.

Belongs to the small GTPase superfamily. Ras family.

Its subcellular location is the cell membrane. It localises to the cytoplasm. It catalyses the reaction GTP + H2O = GDP + phosphate + H(+). With respect to regulation, alternates between an inactive form bound to GDP and an active form bound to GTP. Activated by a guanine nucleotide-exchange factor (GEF) and inactivated by a GTPase-activating protein (GAP). Its function is as follows. Ras proteins bind GDP/GTP and possess intrinsic GTPase activity. Plays an important role in the regulation of cell proliferation. May play a role in promoting oncogenic events by inducing transcriptional silencing of tumor suppressor genes (TSGs). The protein is GTPase KRas (KRAS) of Meleagris gallopavo (Wild turkey).